The sequence spans 104 residues: MFAVVKASGFQRLVEVGSVISIDPTNVDSGGFVHLPVLLLVDGAEVVSDPDKLRLARVSAKFLRKLRGPKVRIHKFKNKTGYHKRQGHRQGVYVFSVTSIERGD.

The protein belongs to the bacterial ribosomal protein bL21 family. In terms of assembly, part of the 50S ribosomal subunit. Contacts protein L20.

Its function is as follows. This protein binds to 23S rRNA in the presence of protein L20. The protein is Large ribosomal subunit protein bL21 of Tropheryma whipplei (strain TW08/27) (Whipple's bacillus).